The sequence spans 366 residues: Peptide chain release factor 2 (366 aa).

Q251 is modified (N5-methylglutamine).

The protein belongs to the prokaryotic/mitochondrial release factor family. Methylated by PrmC. Methylation increases the termination efficiency of RF2.

Its subcellular location is the cytoplasm. Peptide chain release factor 2 directs the termination of translation in response to the peptide chain termination codons UGA and UAA. The polypeptide is Peptide chain release factor 2 (prfB) (Listeria monocytogenes serovar 1/2a (strain ATCC BAA-679 / EGD-e)).